The sequence spans 473 residues: Zinc finger and BTB domain-containing protein 9 (473 aa).

The BTB domain occupies Cys48–Leu112. Residues Gln177 to Pro279 form a disordered region. Low complexity predominate over residues Ser182–Val196. Over residues Val211 to Gln226 the composition is skewed to acidic residues. Polar residues predominate over residues Gly227–Arg239. Lys286 participates in a covalent cross-link: Glycyl lysine isopeptide (Lys-Gly) (interchain with G-Cter in SUMO1); alternate. A Glycyl lysine isopeptide (Lys-Gly) (interchain with G-Cter in SUMO2); alternate cross-link involves residue Lys286. Residues Lys293 and Lys307 each participate in a glycyl lysine isopeptide (Lys-Gly) (interchain with G-Cter in SUMO2) cross-link. The disordered stretch occupies residues Lys293 to Thr376. Over residues Ser355 to Gly364 the composition is skewed to gly residues. Lys382 participates in a covalent cross-link: Glycyl lysine isopeptide (Lys-Gly) (interchain with G-Cter in SUMO2). A C2H2-type 1 zinc finger spans residues Phe411 to His433. A C2H2-type 2; atypical zinc finger spans residues His438–Cys460.

The protein resides in the nucleus. Functionally, may be involved in transcriptional regulation. The sequence is that of Zinc finger and BTB domain-containing protein 9 (ZBTB9) from Homo sapiens (Human).